The following is a 537-amino-acid chain: CTP synthase (537 aa).

Positions M1 to L267 are amidoligase domain. S13 provides a ligand contact to CTP. A UTP-binding site is contributed by S13. ATP is bound at residue S14 to I19. Y54 serves as a coordination point for L-glutamine. D71 serves as a coordination point for ATP. 2 residues coordinate Mg(2+): D71 and E141. Residues D148 to E150, K188 to Q193, and K224 contribute to the CTP site. UTP contacts are provided by residues K188–Q193 and K224. R240–V242 lines the ATP pocket. Positions R292–Q535 constitute a Glutamine amidotransferase type-1 domain. G354 serves as a coordination point for L-glutamine. The Nucleophile; for glutamine hydrolysis role is filled by C381. L-glutamine-binding positions include L382–Q385, E405, and R463. Catalysis depends on residues H508 and E510.

Belongs to the CTP synthase family. Homotetramer.

It carries out the reaction UTP + L-glutamine + ATP + H2O = CTP + L-glutamate + ADP + phosphate + 2 H(+). The catalysed reaction is L-glutamine + H2O = L-glutamate + NH4(+). It catalyses the reaction UTP + NH4(+) + ATP = CTP + ADP + phosphate + 2 H(+). The protein operates within pyrimidine metabolism; CTP biosynthesis via de novo pathway; CTP from UDP: step 2/2. With respect to regulation, allosterically activated by GTP, when glutamine is the substrate; GTP has no effect on the reaction when ammonia is the substrate. The allosteric effector GTP functions by stabilizing the protein conformation that binds the tetrahedral intermediate(s) formed during glutamine hydrolysis. Inhibited by the product CTP, via allosteric rather than competitive inhibition. Its function is as follows. Catalyzes the ATP-dependent amination of UTP to CTP with either L-glutamine or ammonia as the source of nitrogen. Regulates intracellular CTP levels through interactions with the four ribonucleotide triphosphates. This Streptococcus equi subsp. zooepidemicus (strain H70) protein is CTP synthase.